The primary structure comprises 395 residues: 8-amino-7-oxononanoate synthase/2-amino-3-ketobutyrate coenzyme A ligase (395 aa).

Pyridoxal 5'-phosphate is bound at residue G110 to F111. H135 serves as a coordination point for substrate. Pyridoxal 5'-phosphate-binding positions include S182, D207–H210, and T239–K242. An N6-(pyridoxal phosphate)lysine modification is found at K242. Residue T356 participates in substrate binding.

The protein belongs to the class-II pyridoxal-phosphate-dependent aminotransferase family. Homodimer. Pyridoxal 5'-phosphate is required as a cofactor.

The enzyme catalyses 6-carboxyhexanoyl-[ACP] + L-alanine + H(+) = (8S)-8-amino-7-oxononanoate + holo-[ACP] + CO2. It catalyses the reaction glycine + acetyl-CoA = (2S)-2-amino-3-oxobutanoate + CoA. The protein operates within cofactor biosynthesis; biotin biosynthesis. Functionally, catalyzes the decarboxylative condensation of pimeloyl-[acyl-carrier protein] and L-alanine to produce 8-amino-7-oxononanoate (AON), [acyl-carrier protein], and carbon dioxide. Can also use pimeloyl-CoA instead of pimeloyl-ACP as substrate. It also converts 2-amino-3-ketobutyrate and CoA to glycine and acetyl-CoA. Activity is also observed with the following combinations of substrates: acetyl-CoA and either L-alanine or L-serine, pimeloyl-CoA and either glycine or L-serine, and palmitoyl-CoA with L-alanine. The protein is 8-amino-7-oxononanoate synthase/2-amino-3-ketobutyrate coenzyme A ligase of Thermus thermophilus (strain ATCC 27634 / DSM 579 / HB8).